The sequence spans 222 residues: Cytidylate kinase (222 aa).

An ATP-binding site is contributed by 7–15; the sequence is GPSASGKST.

The protein belongs to the cytidylate kinase family. Type 1 subfamily.

Its subcellular location is the cytoplasm. The catalysed reaction is CMP + ATP = CDP + ADP. It catalyses the reaction dCMP + ATP = dCDP + ADP. This Aquifex aeolicus (strain VF5) protein is Cytidylate kinase.